The primary structure comprises 1085 residues: Ubiquitin carboxyl-terminal hydrolase 36 (1085 aa).

The segment covering G23–A36 has biased composition (low complexity). 2 disordered regions span residues G23 to Q47 and K104 to K149. The USP domain maps to T173 to D481. C182 (nucleophile) is an active-site residue. The Proton acceptor role is filled by H440. Disordered regions lie at residues A489–K730, K745–K888, E963–Q1030, and K1043–S1085. Positions S503 to T518 are enriched in low complexity. Phosphoserine occurs at positions 514 and 516. Residues G532–A542 are compositionally biased toward polar residues. A compositionally biased stretch (low complexity) spans N588–N609. Positions M642 to K651 are enriched in basic and acidic residues. Phosphothreonine is present on residues T660 and T664. Phosphoserine is present on residues S674 and S676. Over residues T705–K730 the composition is skewed to polar residues. A Phosphoserine modification is found at S749. Over residues S749 to S758 the composition is skewed to acidic residues. Residues P768–A778 are compositionally biased toward low complexity. Pro residues predominate over residues P779–P788. S781 carries the phosphoserine modification. T784 carries the phosphothreonine modification. At S787 the chain carries Phosphoserine. Residues E805–E818 are compositionally biased toward acidic residues. Over residues K822–P844 the composition is skewed to polar residues. T825 carries the phosphothreonine modification. S843 bears the Phosphoserine mark. A Phosphothreonine modification is found at T846. The span at P859–N884 shows a compositional bias: polar residues. Composition is skewed to low complexity over residues S987 to S998 and Q1056 to A1066.

The protein belongs to the peptidase C19 family. Interacts with atms/PAF1, but not with CycT.

The protein resides in the nucleus. Its subcellular location is the nucleolus. It carries out the reaction Thiol-dependent hydrolysis of ester, thioester, amide, peptide and isopeptide bonds formed by the C-terminal Gly of ubiquitin (a 76-residue protein attached to proteins as an intracellular targeting signal).. Required for maintaining multiple types of adult stem cells, including male and female germline, epithelial follicle cell and intestinal stem cells. May function as a transcriptional repressor by continually deubiquiting histone H2B at the promoters of genes critical for cellular differentiation, thereby preventing histone H3 'Lys-4' trimethylation (H3K4). Controls selective autophagy activation by ubiquitinated proteins. The protein is Ubiquitin carboxyl-terminal hydrolase 36 (Usp36) of Drosophila erecta (Fruit fly).